Here is a 61-residue protein sequence, read N- to C-terminus: uncharacterized protein (61 aa).

An N-terminal signal peptide occupies residues Met-1–Leu-30.

This is an uncharacterized protein from Archaeoglobus fulgidus (strain ATCC 49558 / DSM 4304 / JCM 9628 / NBRC 100126 / VC-16).